A 658-amino-acid polypeptide reads, in one-letter code: DNA mismatch repair protein MutL (658 aa).

Positions 114-130 (RQEDSSHATQVKAEDGK) are enriched in basic and acidic residues. 2 disordered regions span residues 114-137 (RQED…PTAA) and 369-391 (DYPT…TAPM).

Belongs to the DNA mismatch repair MutL/HexB family.

Its function is as follows. This protein is involved in the repair of mismatches in DNA. It is required for dam-dependent methyl-directed DNA mismatch repair. May act as a 'molecular matchmaker', a protein that promotes the formation of a stable complex between two or more DNA-binding proteins in an ATP-dependent manner without itself being part of a final effector complex. The chain is DNA mismatch repair protein MutL from Neisseria meningitidis serogroup C (strain 053442).